Reading from the N-terminus, the 68-residue chain is C-hordein (68 aa).

2 stretches are compositionally biased toward pro residues: residues 1-24 and 33-55; these read YPQQPQPFPQQPIPQQPQPYPQQP and PQQPQPYPQQPQPFPQQPIPLQP. Residues 1–68 form a disordered region; the sequence is YPQQPQPFPQ…YTQQTIWSMV (68 aa). The span at 59–68 shows a compositional bias: polar residues; it reads YTQQTIWSMV.

In terms of tissue distribution, developing endosperm.

Functionally, sulfur-poor seed storage protein. The chain is C-hordein from Hordeum vulgare (Barley).